A 332-amino-acid chain; its full sequence is Adenosine receptor A2b (332 aa).

Residues 1-8 are Extracellular-facing; the sequence is MQLETQDA. The helical transmembrane segment at 9 to 33 threads the bilayer; it reads LYVALELVIAALAVAGNVLVCAAVG. Residues 34 to 43 are Cytoplasmic-facing; that stretch reads ASSALQTPTN. A helical membrane pass occupies residues 44–67; that stretch reads YFLVSLATADVAVGLFAIPFAITI. Residues 68–78 lie on the Extracellular side of the membrane; sequence SLGFCTDFHSC. Cys78 and Cys171 are joined by a disulfide. The helical transmembrane segment at 79-101 threads the bilayer; it reads LFLACFVLVLTQSSIFSLLAVAV. At 102–121 the chain is on the cytoplasmic side; it reads DRYLAIRVPLRYKGLVTGTR. The chain crosses the membrane as a helical span at residues 122–144; that stretch reads ARGIIAVLWVLAFGIGLTPFLGW. Over 145–178 the chain is Extracellular; it reads NSKDRATSNCTEPGDGITNKSCCPVKCLFENVVP. 2 N-linked (GlcNAc...) asparagine glycosylation sites follow: Asn153 and Asn163. Glu174 contacts adenosine. A helical membrane pass occupies residues 179–203; that stretch reads MSYMVYFNFFGCVLPPLLIMMVIYI. The Cytoplasmic portion of the chain corresponds to 204–235; that stretch reads KIFMVACKQLQHMELMEHSRTTLQREIHAAKS. The helical transmembrane segment at 236–259 threads the bilayer; it reads LAMIVGIFALCWLPVHAINCITLF. Asn254 provides a ligand contact to adenosine. Over 260–267 the chain is Extracellular; it reads HPALAKDK. A helical membrane pass occupies residues 268–291; that stretch reads PKWVMNVAILLSHANSVVNPIVYA. Adenosine is bound by residues Ser279 and His280. The Cytoplasmic segment spans residues 292 to 332; the sequence is YRNRDFRYSFHRIISRYVLCQTDTKGGSGQAGGQSTFSLSL. The S-palmitoyl cysteine moiety is linked to residue Cys311.

This sequence belongs to the G-protein coupled receptor 1 family.

Its subcellular location is the cell membrane. In terms of biological role, receptor for adenosine. The activity of this receptor is mediated by G proteins which activate adenylyl cyclase. This chain is Adenosine receptor A2b (Adora2b), found in Rattus norvegicus (Rat).